Consider the following 114-residue polypeptide: uncharacterized protein (114 aa).

The N-terminal stretch at 1-19 (MKASYLVLIFISIFSMAQA) is a signal peptide. The residue at position 41 (Ser-41) is a Phosphoserine.

It belongs to the protease inhibitor I9 family.

This is an uncharacterized protein from Saccharomyces cerevisiae (strain ATCC 204508 / S288c) (Baker's yeast).